We begin with the raw amino-acid sequence, 478 residues long: Microfibrillar-associated protein 1 (478 aa).

Residues 1-20 (MSAATAAAAASGIQSTAGAI) are compositionally biased toward low complexity. 2 disordered regions span residues 1 to 276 (MSAA…RRAT) and 456 to 478 (NEHAGGMRQQFDKPTGSKRKKME). The span at 53 to 62 (SSEESDDDDF) shows a compositional bias: acidic residues. Basic and acidic residues predominate over residues 107–128 (DDPRLRRLRQRPVDMEDMERER). A compositionally biased stretch (acidic residues) spans 140–153 (IMESDSEDEEEDEG). Residues 160–170 (RGTNKITLASE) are compositionally biased toward polar residues. Over residues 171-181 (SDTDAELSDTE) the composition is skewed to acidic residues. Residues 197 to 212 (QREEEVLQKEDEKQSE) are compositionally biased toward basic and acidic residues. Residues 214 to 231 (SESESSEYEEETESEEDN) are compositionally biased toward acidic residues. The interaction with Prp38 stretch occupies residues 229-478 (EDNEPRLKPL…PTGSKRKKME (250 aa)). Positions 245–268 (RATIQEKEREAQKQKQLEAEAKRA) are enriched in basic and acidic residues.

It belongs to the MFAP1 family. In terms of assembly, component of the spliceosome B complex. Interacts (via C-terminus) with Prp38.

The protein localises to the nucleus. Functionally, required for pre-mRNA splicing. This chain is Microfibrillar-associated protein 1, found in Drosophila melanogaster (Fruit fly).